Reading from the N-terminus, the 155-residue chain is Photosystem II extrinsic protein V (155 aa).

A signal peptide spans 1–20; the sequence is MFVKMIGWLVLFLFAHQTWA. Residues cysteine 50, cysteine 53, histidine 54, and histidine 105 each coordinate heme c.

Belongs to the cytochrome c family. PsbV subfamily. In terms of assembly, PSII is composed of 1 copy each of membrane proteins PsbA, PsbB, PsbC, PsbD, PsbE, PsbF, PsbH, PsbI, PsbJ, PsbK, PsbL, PsbM, PsbT, PsbY, PsbZ, Psb30/Ycf12, at least 3 peripheral proteins of the oxygen-evolving complex and a large number of cofactors. It forms dimeric complexes. The extrinsic subunits in red algae are PsbO (OEC33), PsbQ', cytochrome c-550 and PsbU. Heme c serves as cofactor.

It is found in the plastid. The protein resides in the chloroplast thylakoid membrane. In terms of biological role, one of the extrinsic, lumenal subunits of photosystem II (PSII). PSII is a light-driven water plastoquinone oxidoreductase, using light energy to abstract electrons from H(2)O, generating a proton gradient subsequently used for ATP formation. The extrinsic proteins stabilize the structure of photosystem II oxygen-evolving complex (OEC), the ion environment of oxygen evolution and protect the OEC against heat-induced inactivation. Unlike the T.vulcanus ortholog, it does not bind by itself to PSII, but requires all extrinsic members of the OEC. The chain is Photosystem II extrinsic protein V from Cyanidium caldarium (Red alga).